The chain runs to 1119 residues: MKYSSFLLLFIYIFFILNNINAQSCPSTSSTWRPTMASFVTPTSPSIATIQPQLDFLLGKNNLVFMGQYGYSATSITDGPTGVANSFTMNYDTWGPAMHWLVVKTPVPALKANQNYEFSFGFKLGQVLGSYNKIASISVNFFNPADITDPNGGSQYFVTPAHPAVYSKTVTTGSWTSSTTFAQNIITLTPTVDIGLSIMAIQITRTSQTGPAITTMFVSNMKLSIPSRTVPAPPTNLITKDSELIAIPKPLSSLDAQDSTTCPYLATDLVHWHDPTIWTSGVVPLPSTSSNIIIPAGKKVLISPCSINQTGIYQKITIPATSELIFADASLTMNIQDIYVQGKFIMGTTKCRYNANINIVFNGAMTTVDTIAQYFGSKGIAVASGGFISVHGRQYHNTWTKLAATAWSGDNVIYIQDDVNWIVGQQVVVATSVYQDEKYPENEVMTIAAIQGKVIQFTEPLKYYHYGGQEYQAEVALLTRNIVFQSESSSAASSFGGHVLVSGEGQFAGIQLIRMGQRNIKGRYPLHFHMANTVSKSYISDCSVVSSYYRCYTIHATNNVTVTRNVAFDVNGHCYYLEDGVEMDNTLSFNFASYVHTIGTPAAGYNQYGQDFTQSSSLAQPADVAAGGFYITNAWNSFIGNAASGGWAGFSFPNLDAPIGNSINVPIVPKQFTTKVFQGNTAHSSGYFFEFGSSIYVGGDLSTGSDGLLVYNSGRISRETYLNGVESGGEIWMRFNNTKVYLSNRGIGMWGERVEVILLESHDSIRPGSLFGEAWLSDAIVNGQTGNLLSKTTDYSRQGFQFYDTYVKTILTNIIFRNFVHNPLSTSPEDDNRVIISMTHSDEFKPQFISATKNITIQGTAVSQYIGHRIFDTGSSRQFNFVDYDGTISGRSVPTIFGAHDKWWQFDNTCTYNNDWNSWVCNKGTYEVASVSVEVPGYMDRSGEYDATSNVGYIYLFGSGITDSRRMNVTRNVGITGISDFGWYLYWTVGTPSYIKLWLSEVPYGHYVFFAIPYPASTTFKVSCEYKYNSQHSYNFTQATSAAAVRSGDGKKYYFNGTHLFVKVINFVLNGSEYFSRGGAKINDVYWEFIVHITATNTVKPPVNGFYTGLTDVLPSSTL.

Residues 1-22 (MKYSSFLLLFIYIFFILNNINA) form the signal peptide. The G8 domain occupies 276–404 (TIWTSGVVPL…YHNTWTKLAA (129 aa)). Asparagine 308, asparagine 559, asparagine 736, asparagine 854, asparagine 968, asparagine 1035, asparagine 1056, and asparagine 1070 each carry an N-linked (GlcNAc...) asparagine glycan.

It belongs to the comF family.

The protein resides in the secreted. This Dictyostelium discoideum (Social amoeba) protein is G8 domain-containing protein DDB_G0288475.